A 501-amino-acid polypeptide reads, in one-letter code: Probable cytosol aminopeptidase (501 aa).

Residues lysine 270 and aspartate 275 each contribute to the Mn(2+) site. The active site involves lysine 282. Residues aspartate 293, aspartate 352, and glutamate 354 each contribute to the Mn(2+) site. Arginine 356 is a catalytic residue.

Belongs to the peptidase M17 family. Mn(2+) serves as cofactor.

The protein resides in the cytoplasm. It carries out the reaction Release of an N-terminal amino acid, Xaa-|-Yaa-, in which Xaa is preferably Leu, but may be other amino acids including Pro although not Arg or Lys, and Yaa may be Pro. Amino acid amides and methyl esters are also readily hydrolyzed, but rates on arylamides are exceedingly low.. It catalyses the reaction Release of an N-terminal amino acid, preferentially leucine, but not glutamic or aspartic acids.. In terms of biological role, presumably involved in the processing and regular turnover of intracellular proteins. Catalyzes the removal of unsubstituted N-terminal amino acids from various peptides. This Wigglesworthia glossinidia brevipalpis protein is Probable cytosol aminopeptidase.